Here is a 42-residue protein sequence, read N- to C-terminus: Potassium channel toxin gamma-KTx 1.5 (42 aa).

4 disulfides stabilise this stretch: Cys-5–Cys-23, Cys-11–Cys-34, Cys-20–Cys-39, and Cys-24–Cys-41.

It belongs to the ergtoxin family. Gamma-KTx 1 subfamily. Expressed by the venom gland.

The protein resides in the secreted. Blocks Kv11/ERG potassium channels. This chain is Potassium channel toxin gamma-KTx 1.5, found in Centruroides limpidus (Mexican scorpion).